Here is a 317-residue protein sequence, read N- to C-terminus: Proline-rich protein 2 (317 aa).

The first 16 residues, 1–16 (MLVVLFTVALLALSSA), serve as a signal peptide directing secretion. Residues 15 to 317 (SAQGPREELQ…PPQGRPQGPQ (303 aa)) are disordered. Pro residues predominate over residues 32–44 (QRPPPSGSQPRPP). N-linked (GlcNAc...) asparagine glycosylation is present at Asn-46. Pro residues-rich tracts occupy residues 51–183 (GPPP…PPAG) and 204–288 (QSPP…PTQG). The segment covering 289-305 (PHPTGGPQQTPPLAGNP) has biased composition (low complexity). The span at 306–317 (QGPPQGRPQGPQ) shows a compositional bias: pro residues.

The protein localises to the secreted. The polypeptide is Proline-rich protein 2 (Prp2) (Mus musculus (Mouse)).